The following is a 252-amino-acid chain: MLAKRIIPCLDVDNGRVVKGVQFLDIRDAGDPVEVARRYNEQGADEITFLDITATHHGRDTTYRTVERMAETVFVPLTVGGGVRKVEDIRALLNAGADKVSINSAAVFNPEFVQEASQHFGAQCIVVAIDAKKTGDNKWEIFTHGGRKPTGIDAIEWAVKMADYGAGELLITSMDADGTKAGYDIALMRAINDRVTIPTIASGGVGNLQHLADGILQGGADAVLAASIFHFGQYTIPEAKQYLAEQGIEMRL.

Catalysis depends on residues Asp11 and Asp130.

It belongs to the HisA/HisF family. Heterodimer of HisH and HisF.

The protein localises to the cytoplasm. It carries out the reaction 5-[(5-phospho-1-deoxy-D-ribulos-1-ylimino)methylamino]-1-(5-phospho-beta-D-ribosyl)imidazole-4-carboxamide + L-glutamine = D-erythro-1-(imidazol-4-yl)glycerol 3-phosphate + 5-amino-1-(5-phospho-beta-D-ribosyl)imidazole-4-carboxamide + L-glutamate + H(+). It functions in the pathway amino-acid biosynthesis; L-histidine biosynthesis; L-histidine from 5-phospho-alpha-D-ribose 1-diphosphate: step 5/9. Functionally, IGPS catalyzes the conversion of PRFAR and glutamine to IGP, AICAR and glutamate. The HisF subunit catalyzes the cyclization activity that produces IGP and AICAR from PRFAR using the ammonia provided by the HisH subunit. The chain is Imidazole glycerol phosphate synthase subunit HisF from Acinetobacter baumannii (strain AB307-0294).